Consider the following 31-residue polypeptide: Photosystem II reaction center protein T (31 aa).

The helical transmembrane segment at 3–23 threads the bilayer; sequence AFSYTLLMALAAVTLFFAVAF.

It belongs to the PsbT family. PSII is composed of 1 copy each of membrane proteins PsbA, PsbB, PsbC, PsbD, PsbE, PsbF, PsbH, PsbI, PsbJ, PsbK, PsbL, PsbM, PsbT, PsbX, PsbY, Psb30/Ycf12, peripheral proteins PsbO, CyanoQ (PsbQ), PsbU, PsbV and a large number of cofactors. It forms dimeric complexes.

The protein resides in the cellular thylakoid membrane. In terms of biological role, found at the monomer-monomer interface of the photosystem II (PS II) dimer, plays a role in assembly and dimerization of PSII. PSII is a light-driven water plastoquinone oxidoreductase, using light energy to abstract electrons from H(2)O, generating a proton gradient subsequently used for ATP formation. The sequence is that of Photosystem II reaction center protein T from Prochlorococcus marinus (strain MIT 9211).